The sequence spans 355 residues: Protein RecA (355 aa).

Glycine 67–threonine 74 is a binding site for ATP.

Belongs to the RecA family.

It localises to the cytoplasm. In terms of biological role, can catalyze the hydrolysis of ATP in the presence of single-stranded DNA, the ATP-dependent uptake of single-stranded DNA by duplex DNA, and the ATP-dependent hybridization of homologous single-stranded DNAs. It interacts with LexA causing its activation and leading to its autocatalytic cleavage. This is Protein RecA from Shewanella piezotolerans (strain WP3 / JCM 13877).